The primary structure comprises 85 residues: Ice-structuring protein 4 (85 aa).

The signal sequence occupies residues 1–21; sequence MRITEANPDPDAKAVPAAAAP.

The protein belongs to the type-I AFP family.

Its subcellular location is the secreted. Functionally, contributes to protect fish blood from freezing at subzero sea water temperatures. Lowers the blood freezing point. Binds to nascent ice crystals and prevents further growth. The chain is Ice-structuring protein 4 from Pseudopleuronectes americanus (Winter flounder).